The sequence spans 519 residues: Aldehyde dehydrogenase, mitochondrial (519 aa).

The transit peptide at 1 to 19 (MLRAALSTARRGPRLSRLL) directs the protein to the mitochondrion. The SIFI-degron motif lies at 12-26 (GPRLSRLLSAAATSA). Lys54, Lys75, Lys80, and Lys161 each carry N6-acetyllysine. 264–269 (GSTEVG) lines the NAD(+) pocket. Glu287 (proton acceptor) is an active-site residue. The active-site Nucleophile is the Cys321. N6-acetyllysine occurs at positions 370, 377, 385, 409, 428, 430, 443, and 453.

Belongs to the aldehyde dehydrogenase family. In terms of assembly, homotetramer. In terms of processing, in response to mitochondrial stress, the precursor protein is ubiquitinated by the SIFI complex in the cytoplasm before mitochondrial import, leading to its degradation. Within the SIFI complex, UBR4 initiates ubiquitin chain that are further elongated or branched by KCMF1.

The protein resides in the mitochondrion matrix. The enzyme catalyses an aldehyde + NAD(+) + H2O = a carboxylate + NADH + 2 H(+). It functions in the pathway alcohol metabolism; ethanol degradation; acetate from ethanol: step 2/2. Its function is as follows. Required for clearance of cellular formaldehyde, a cytotoxic and carcinogenic metabolite that induces DNA damage. The chain is Aldehyde dehydrogenase, mitochondrial (Aldh2) from Rattus norvegicus (Rat).